The following is a 169-amino-acid chain: Large ribosomal subunit protein uL10 (169 aa).

It belongs to the universal ribosomal protein uL10 family. Part of the ribosomal stalk of the 50S ribosomal subunit. The N-terminus interacts with L11 and the large rRNA to form the base of the stalk. The C-terminus forms an elongated spine to which L12 dimers bind in a sequential fashion forming a multimeric L10(L12)X complex.

In terms of biological role, forms part of the ribosomal stalk, playing a central role in the interaction of the ribosome with GTP-bound translation factors. In Onion yellows phytoplasma (strain OY-M), this protein is Large ribosomal subunit protein uL10.